A 309-amino-acid chain; its full sequence is Homoserine kinase (309 aa).

91 to 101 (PVGSGLGSSAC) is an ATP binding site.

The protein belongs to the GHMP kinase family. Homoserine kinase subfamily.

It is found in the cytoplasm. The enzyme catalyses L-homoserine + ATP = O-phospho-L-homoserine + ADP + H(+). Its pathway is amino-acid biosynthesis; L-threonine biosynthesis; L-threonine from L-aspartate: step 4/5. Functionally, catalyzes the ATP-dependent phosphorylation of L-homoserine to L-homoserine phosphate. The chain is Homoserine kinase from Hamiltonella defensa subsp. Acyrthosiphon pisum (strain 5AT).